The primary structure comprises 556 residues: Glucose-6-phosphate isomerase (556 aa).

E364 acts as the Proton donor in catalysis. Residues H395 and K521 contribute to the active site.

It belongs to the GPI family.

It localises to the cytoplasm. It carries out the reaction alpha-D-glucose 6-phosphate = beta-D-fructose 6-phosphate. The protein operates within carbohydrate biosynthesis; gluconeogenesis. It participates in carbohydrate degradation; glycolysis; D-glyceraldehyde 3-phosphate and glycerone phosphate from D-glucose: step 2/4. Catalyzes the reversible isomerization of glucose-6-phosphate to fructose-6-phosphate. The polypeptide is Glucose-6-phosphate isomerase (Corynebacterium kroppenstedtii (strain DSM 44385 / JCM 11950 / CIP 105744 / CCUG 35717)).